A 356-amino-acid polypeptide reads, in one-letter code: MHTPLLDLTGLTREALTSLVVEQLGEKPFRARQLWSWLHVKLAQHLDEMSDLSIDFRRKLSALSTPLRPEVSTHQISRDGTEKWLLRLSDGQQIETVYIPEDERGTLCISSQVGCTLSCPFCHTGAQGFARNLTPSEIVQQVLFARRTLAARDKRVTNIVLMGMGEPLYNYEAVRDAVLILLDDSGLAFGTRKVTLSTAGLLPKMEQAGRELGVNLAISLHAVRDTLRDELVPLNKKYNLQALRAATLRYPLKSGRRVTWEYVMLHGVNDSEDDARLFVSFLKDIPSKINLIPFNPWPGVPYQSSSMTRIAAFQKILYQAGFVTVIRDRRGEDIDAACGQLKGAVQGARPRPPGAS.

The Proton acceptor role is filled by glutamate 95. Residues 101–332 (EDERGTLCIS…VTVIRDRRGE (232 aa)) form the Radical SAM core domain. Cysteine 108 and cysteine 338 are disulfide-bonded. [4Fe-4S] cluster contacts are provided by cysteine 115, cysteine 119, and cysteine 122. Residues 165-166 (GE), serine 197, 219-221 (SLH), and asparagine 295 each bind S-adenosyl-L-methionine. The active-site S-methylcysteine intermediate is cysteine 338.

The protein belongs to the radical SAM superfamily. RlmN family. It depends on [4Fe-4S] cluster as a cofactor.

The protein resides in the cytoplasm. The enzyme catalyses adenosine(2503) in 23S rRNA + 2 reduced [2Fe-2S]-[ferredoxin] + 2 S-adenosyl-L-methionine = 2-methyladenosine(2503) in 23S rRNA + 5'-deoxyadenosine + L-methionine + 2 oxidized [2Fe-2S]-[ferredoxin] + S-adenosyl-L-homocysteine. It catalyses the reaction adenosine(37) in tRNA + 2 reduced [2Fe-2S]-[ferredoxin] + 2 S-adenosyl-L-methionine = 2-methyladenosine(37) in tRNA + 5'-deoxyadenosine + L-methionine + 2 oxidized [2Fe-2S]-[ferredoxin] + S-adenosyl-L-homocysteine. In terms of biological role, specifically methylates position 2 of adenine 2503 in 23S rRNA and position 2 of adenine 37 in tRNAs. m2A2503 modification seems to play a crucial role in the proofreading step occurring at the peptidyl transferase center and thus would serve to optimize ribosomal fidelity. The protein is Dual-specificity RNA methyltransferase RlmN of Magnetococcus marinus (strain ATCC BAA-1437 / JCM 17883 / MC-1).